The sequence spans 375 residues: Actin, cytoplasmic (375 aa).

The protein belongs to the actin family.

It is found in the cytoplasm. Its subcellular location is the cytoskeleton. The catalysed reaction is ATP + H2O = ADP + phosphate + H(+). Actins are highly conserved proteins that are involved in various types of cell motility and are ubiquitously expressed in all eukaryotic cells. The protein is Actin, cytoplasmic of Oxytricha trifallax (Sterkiella histriomuscorum).